The sequence spans 593 residues: High affinity cGMP-specific 3',5'-cyclic phosphodiesterase 9A (593 aa).

The interval 87-141 (SAGVEDKRTTSRGQSAERPLRDRRVVGLEQPRREGAFESGQVEPRPREPQGCYQE) is disordered. Residues 104 to 122 (RPLRDRRVVGLEQPRREGA) are compositionally biased toward basic and acidic residues. Residues 236 to 557 (PRRDVPTYPK…DRYEELKRID (322 aa)) enclose the PDEase domain. The active-site Proton donor is the H312. 312–316 (HNFRH) contributes to the 3',5'-cyclic GMP binding site. Residues H316, H352, and D353 each coordinate Zn(2+). D353 lines the 3',5'-cyclic GMP pocket. D353 contributes to the Mg(2+) binding site. S379 is modified (phosphoserine). Residues D462, Y484, and 512–513 (AQ) contribute to the 3',5'-cyclic GMP site. D462 contacts Zn(2+). A disordered region spans residues 564–593 (QKKTDSLTSGATEKSRERSRDVKNSEGDCA). Positions 576–593 (EKSRERSRDVKNSEGDCA) are enriched in basic and acidic residues.

This sequence belongs to the cyclic nucleotide phosphodiesterase family. PDE9 subfamily. In terms of assembly, homodimer. Zn(2+) is required as a cofactor. Mg(2+) serves as cofactor. Expressed in all tissues examined (testis, brain, small intestine, skeletal muscle, heart, lung, thymus, spleen, placenta, kidney, liver, pancreas, ovary and prostate) except blood. Highest levels in brain, heart, kidney, spleen, prostate and colon. Isoform PDE9A12 is found in prostate. In brain, present in the cortex, cerebellum, and subiculum (at protein level). In heart, primarily localizes to myocytes.

It is found in the cell projection. The protein localises to the ruffle membrane. The protein resides in the cytoplasm. Its subcellular location is the perinuclear region. It localises to the golgi apparatus. It is found in the endoplasmic reticulum. The protein localises to the cell membrane. The protein resides in the sarcolemma. The catalysed reaction is 3',5'-cyclic GMP + H2O = GMP + H(+). Its pathway is purine metabolism; 3',5'-cyclic GMP degradation; GMP from 3',5'-cyclic GMP: step 1/1. With respect to regulation, inhibited by zaprinast; inhibitor is however not specific to PDE9A. Specifically inhibited by BAY-73-6691 (1-(2-chlorophenyl)-6-((2R)-3,3,3- trifluoro-2-methylpropyl)-1,5-dihydro-4H-pyrazolo(3,4-d)pyrimidine-4-one). BAY-73-9961 has two enantiomers, (R) and (S), due to the presence of a chiral center, and both forms vary in their pattern of interaction. Specifically inhibited by PF-4181366 (4H-Pyrazolo[3,4-d]pyrimidin-4-one, 1- cyclopentyl-1,5-dihydro-6-[(3S,4S)-4-methyl- 1-(6-quinoxalinylmethyl)-3-pyrrolidinyl]-one). Specifically inhibited by PF-4449613 ((R)-6-(1-(3-phenoxyazetidin-1-yl)ethyl)-1-(tetrahydro-2H-pyran-4-yl)-1H-pyrazolo[3,4-d]pyrimidin- 4(5H)-one). Specifically inhibited by inhibitor 28 (2-((1-(2-Chlorophenyl)-4-hydroxy-1Hpyrazolo[ 3,4-d]pyrimidin-6-yl)amino)-N-(4- methoxyphenyl)propanamide): inhibitor forms a hydrogen bond with Tyr-484 and Gln-513. Specifically inhibited by 1-Cyclopentyl-6-[(1r)-1-(3-phenoxyazetidin- 1-Yl)ethyl]-1,5-dihydro-4h-pyrazolo[3,4-D] pyrimidin-4-one: inhibitor forms a hydrogen bond with Tyr-484 and Gln-513. Specifically hydrolyzes the second messenger cGMP, which is a key regulator of many important physiological processes. Highly specific: compared to other members of the cyclic nucleotide phosphodiesterase family, has the highest affinity and selectivity for cGMP. Specifically regulates natriuretic-peptide-dependent cGMP signaling in heart, acting as a regulator of cardiac hypertrophy in myocytes and muscle. Does not regulate nitric oxide-dependent cGMP in heart. Additional experiments are required to confirm whether its ability to hydrolyze natriuretic-peptide-dependent cGMP is specific to heart or is a general feature of the protein. In brain, involved in cognitive function, such as learning and long-term memory. This chain is High affinity cGMP-specific 3',5'-cyclic phosphodiesterase 9A, found in Homo sapiens (Human).